Reading from the N-terminus, the 174-residue chain is Gamma-crystallin E (174 aa).

2 Beta/gamma crystallin 'Greek key' domains span residues 2 to 40 (GKITFYEDRGFQGRHYECSTDHSNLQPYFSRCNSVRVDS) and 41 to 83 (GCWM…RLIP). Residues 84 to 87 (HSSS) form a connecting peptide region. 2 consecutive Beta/gamma crystallin 'Greek key' domains span residues 88-128 (HRIR…HVME) and 129-171 (GYWV…RRIM).

The protein belongs to the beta/gamma-crystallin family. Detected in the superior olivary complex and fibers of the ventral aoustic stria of the auditory hindbrain.

Crystallins are the dominant structural components of the vertebrate eye lens. The protein is Gamma-crystallin E (Cryge) of Rattus norvegicus (Rat).